The sequence spans 213 residues: Imidazole glycerol phosphate synthase subunit HisH (213 aa).

Positions 1–212 (MLAILDYKAG…HRYCTEAADA (212 aa)) constitute a Glutamine amidotransferase type-1 domain. Catalysis depends on cysteine 79, which acts as the Nucleophile. Active-site residues include histidine 187 and glutamate 189.

Heterodimer of HisH and HisF.

It localises to the cytoplasm. The enzyme catalyses 5-[(5-phospho-1-deoxy-D-ribulos-1-ylimino)methylamino]-1-(5-phospho-beta-D-ribosyl)imidazole-4-carboxamide + L-glutamine = D-erythro-1-(imidazol-4-yl)glycerol 3-phosphate + 5-amino-1-(5-phospho-beta-D-ribosyl)imidazole-4-carboxamide + L-glutamate + H(+). It carries out the reaction L-glutamine + H2O = L-glutamate + NH4(+). It participates in amino-acid biosynthesis; L-histidine biosynthesis; L-histidine from 5-phospho-alpha-D-ribose 1-diphosphate: step 5/9. IGPS catalyzes the conversion of PRFAR and glutamine to IGP, AICAR and glutamate. The HisH subunit catalyzes the hydrolysis of glutamine to glutamate and ammonia as part of the synthesis of IGP and AICAR. The resulting ammonia molecule is channeled to the active site of HisF. This chain is Imidazole glycerol phosphate synthase subunit HisH, found in Nitratidesulfovibrio vulgaris (strain DP4) (Desulfovibrio vulgaris).